The following is a 125-amino-acid chain: Large ribosomal subunit protein bL12 (125 aa).

This sequence belongs to the bacterial ribosomal protein bL12 family. Homodimer. Part of the ribosomal stalk of the 50S ribosomal subunit. Forms a multimeric L10(L12)X complex, where L10 forms an elongated spine to which 2 to 4 L12 dimers bind in a sequential fashion. Binds GTP-bound translation factors.

Its function is as follows. Forms part of the ribosomal stalk which helps the ribosome interact with GTP-bound translation factors. Is thus essential for accurate translation. This chain is Large ribosomal subunit protein bL12, found in Polaromonas sp. (strain JS666 / ATCC BAA-500).